The chain runs to 25 residues: Pancreatic triacylglycerol lipase (25 aa).

A disulfide bond links Cys4 and Cys10.

This sequence belongs to the AB hydrolase superfamily. Lipase family. As to quaternary structure, forms a 1:1 stoichiometric complex with (pro)colipase/CLPS.

The protein resides in the secreted. The catalysed reaction is a triacylglycerol + H2O = a diacylglycerol + a fatty acid + H(+). It catalyses the reaction 1,2,3-tributanoylglycerol + H2O = dibutanoylglycerol + butanoate + H(+). The enzyme catalyses 1,2,3-tri-(9Z-octadecenoyl)-glycerol + H2O = di-(9Z)-octadecenoylglycerol + (9Z)-octadecenoate + H(+). It carries out the reaction all-trans-retinyl hexadecanoate + H2O = all-trans-retinol + hexadecanoate + H(+). The catalysed reaction is 1,2-di-(9Z-octadecenoyl)-glycerol + H2O = (9Z-octadecenoyl)-glycerol + (9Z)-octadecenoate + H(+). Inhibited by bile salts, is reactivated by (pro)colipase/CLPS. In terms of biological role, plays an important role in fat metabolism. It preferentially splits the esters of long-chain fatty acids at positions 1 and 3, producing mainly 2-monoacylglycerol and free fatty acids, and shows considerably higher activity against insoluble emulsified substrates than against soluble ones. The chain is Pancreatic triacylglycerol lipase (PNLIP) from Felis catus (Cat).